The primary structure comprises 346 residues: Phospholipase A1 (346 aa).

The N-terminal stretch at 1-26 (MRKFAAIFVVFFVQCTHLYSLAQARA) is a signal peptide. The propeptide occupies 27-37 (EPDPGVVEYLK). Residues asparagine 44 and asparagine 72 are each glycosylated (N-linked (GlcNAc...) asparagine). Serine 167 serves as the catalytic Nucleophile. N-linked (GlcNAc...) asparagine glycosylation is present at asparagine 185. Catalysis depends on charge relay system residues aspartate 195 and histidine 258.

It belongs to the AB hydrolase superfamily. Lipase family. In terms of processing, contains six disulfide bonds. Post-translationally, N-glycosylated; contains mannose. As to expression, expressed by the venom gland.

It localises to the secreted. It catalyses the reaction a 1,2-diacyl-sn-glycero-3-phosphocholine + H2O = a 2-acyl-sn-glycero-3-phosphocholine + a fatty acid + H(+). Functionally, catalyzes the hydrolysis of phosphatidylcholine with phospholipase A1 activity. Induces hemolytic activity. Acts as an allergen. The sequence is that of Phospholipase A1 from Solenopsis invicta (Red imported fire ant).